Reading from the N-terminus, the 290-residue chain is Ribonuclease HIII (290 aa).

The 213-residue stretch at 78-290 (LPLIGTDEVG…FKNTEKAKNA (213 aa)) folds into the RNase H type-2 domain. Positions 84, 85, and 187 each coordinate a divalent metal cation.

It belongs to the RNase HII family. RnhC subfamily. It depends on Mn(2+) as a cofactor. Requires Mg(2+) as cofactor.

Its subcellular location is the cytoplasm. It catalyses the reaction Endonucleolytic cleavage to 5'-phosphomonoester.. Endonuclease that specifically degrades the RNA of RNA-DNA hybrids. The protein is Ribonuclease HIII of Streptococcus pneumoniae (strain CGSP14).